Reading from the N-terminus, the 207-residue chain is Pyridoxine/pyridoxamine 5'-phosphate oxidase (207 aa).

Residues 53–58 (RMVLLK), 68–69 (YT), Lys-75, and Gln-97 each bind FMN. Residue Lys-58 participates in substrate binding. Tyr-115, Arg-119, and Ser-123 together coordinate substrate. Residues 132 to 133 (QS) and Trp-177 each bind FMN. 183-185 (RLH) serves as a coordination point for substrate. Arg-187 contributes to the FMN binding site.

The protein belongs to the pyridoxamine 5'-phosphate oxidase family. As to quaternary structure, homodimer. The cofactor is FMN.

It catalyses the reaction pyridoxamine 5'-phosphate + O2 + H2O = pyridoxal 5'-phosphate + H2O2 + NH4(+). The enzyme catalyses pyridoxine 5'-phosphate + O2 = pyridoxal 5'-phosphate + H2O2. It participates in cofactor metabolism; pyridoxal 5'-phosphate salvage; pyridoxal 5'-phosphate from pyridoxamine 5'-phosphate: step 1/1. It functions in the pathway cofactor metabolism; pyridoxal 5'-phosphate salvage; pyridoxal 5'-phosphate from pyridoxine 5'-phosphate: step 1/1. In terms of biological role, catalyzes the oxidation of either pyridoxine 5'-phosphate (PNP) or pyridoxamine 5'-phosphate (PMP) into pyridoxal 5'-phosphate (PLP). This is Pyridoxine/pyridoxamine 5'-phosphate oxidase from Bartonella henselae (strain ATCC 49882 / DSM 28221 / CCUG 30454 / Houston 1) (Rochalimaea henselae).